The following is an 86-amino-acid chain: Putative regulatory protein BBR47_37350 (86 aa).

It belongs to the RemA family.

The protein is Putative regulatory protein BBR47_37350 of Brevibacillus brevis (strain 47 / JCM 6285 / NBRC 100599).